We begin with the raw amino-acid sequence, 1069 residues long: RE1-silencing transcription factor (1069 aa).

The interaction with SIN3A stretch occupies residues 32–121; it reads DLHDLSKAEL…SLELSVVEPQ (90 aa). The segment at 43 to 57 is interaction with SIN3B; the sequence is APQLIMLANVALTGE. Positions 85-104 are disordered; that stretch reads SDSEGEGLEESAELKGDPSG. The interaction with ZFP90 stretch occupies residues 144–417; it reads PVAEDKCKNL…KSKHPTCPSK (274 aa). The C2H2-type 1 zinc-finger motif lies at 158–180; that stretch reads FRCKPCQYEAESEEQFVHHIRVH. Residues 200-211 are required for binding to the neuron-restrictive silencer element; it reads SGASPSEEGEFS. 7 consecutive C2H2-type zinc fingers follow at residues 215–237, 247–269, 275–297, 303–325, 331–354, 360–382, and 388–411; these read IRCD…LKHH, YKCI…LRNH, YTCS…VRTH, YKCE…MRTH, FKCD…RQVH, LNCP…VELH, and FNCP…KSKH. Disordered regions lie at residues 425 to 737 and 830 to 1022; these read KLKK…MELP and KASK…GKEG. Over residues 451–482 the composition is skewed to basic and acidic residues; it reads EQAKTKGVDASARRSERPVKGVGKDVPKEKKP. Over residues 484–493 the composition is skewed to polar residues; the sequence is SNASVVQVTT. Basic and acidic residues-rich tracts occupy residues 498–511 and 554–576; these read SAVE…KHTD and ESKP…KADK. The segment covering 584–600 has biased composition (basic residues); the sequence is KGGKKTALKTKTAKKGS. A compositionally biased stretch (polar residues) spans 630–643; it reads AVVTPSGSTQTELS. Composition is skewed to pro residues over residues 679 to 706 and 713 to 734; these read PSPP…PCPM and PSPP…PLPM. 2 stretches are compositionally biased toward basic and acidic residues: residues 851 to 860 and 876 to 886; these read RREETPKDQE and GGTEEAGESRA. The segment covering 894 to 904 has biased composition (low complexity); it reads STSALSSEQSS. Residues 930 to 943 show a composition bias toward basic and acidic residues; the sequence is TEQKTDRVPLKDSA. Phosphoserine is present on serine 948. Residues 957-968 are compositionally biased toward low complexity; sequence EAAAPAVVASPP. The segment at 981–1059 is interaction with RCOR1; it reads EGIHSHDGSD…HLNRHLVNVY (79 aa). Residues 1032–1054 form a C2H2-type 9 zinc finger; it reads FVCIFCDRSFRKEKDYSKHLNRH.

In terms of assembly, isoform 1 and isoform 6 form heterodimers. Isoform 6: Forms homodimers and homooligomers; binds to the neuron-restrictive silencer element (NRSE) as monomer. Interacts with SIN3A, SIN3B and RCOR1. Interacts with CDYL. Interacts with EHMT1 and EHMT2 only in the presence of CDYL. Part of a complex containing at least CDYL, REST, WIZ, SETB1, EHMT1 and EHMT2. Interacts (via zinc-finger DNA-binding domain) with ZFP90 (via N- and C-termini); the interaction inhibits REST repressor activity. Interacts (via C2H2-type zinc finger 5) with PRICKLE1. Interacts with FBXW11 and BTRC. Interacts with USP7. In terms of processing, O-glycosylated. Phosphorylated; phosphorylation is required for ubiquitination. Post-translationally, ubiquitinated; ubiquitination is mediated by BTRC and leads to proteasomal degradation in G2 phase. Ubiquitination increases during neuronal differentiation. Deubiquitinated by USP7; leading to its stabilization and promoting the maintenance of neural progenitor cells. In terms of tissue distribution, expressed in the hippocampus including the granule cell layer of the dentate gyrus, the pyramidal cell layers of CA1 and CA3, the apical and basilar dendrite layers of the stratum radiatum and stratum oriens of CA1, the stratum lucidum and stratum oriens of CA3 and in astroglia (at protein level). Expressed in the brain, with the highest levels in the neurons of hippocampus, pons/medulla and midbrain.

The protein localises to the nucleus. Its subcellular location is the cytoplasm. Transcriptional repressor which binds neuron-restrictive silencer element (NRSE) and represses neuronal gene transcription in non-neuronal cells. Restricts the expression of neuronal genes by associating with two distinct corepressors, SIN3A and RCOR1, which in turn recruit histone deacetylase to the promoters of REST-regulated genes. Mediates repression by recruiting the BHC complex at RE1/NRSE sites which acts by deacetylating and demethylating specific sites on histones, thereby acting as a chromatin modifier. Transcriptional repression by REST-CDYL via the recruitment of histone methyltransferase EHMT2 may be important in transformation suppression. Represses the expression of SRRM4 in non-neural cells to prevent the activation of neural-specific splicing events and to prevent production of REST isoform 6. Repressor activity may be inhibited by forming heterodimers with isoform 6, thereby preventing binding to NRSE or binding to corepressors and leading to derepression of target genes. Also maintains repression of neuronal genes in neural stem cells, and allows transcription and differentiation into neurons by dissociation from RE1/NRSE sites of target genes. Thereby is involved in maintaining the quiescent state of adult hippocampal neural stem cells and preventing premature differentiation into mature neurons. Plays a role in the developmental switch in synaptic NMDA receptor composition during postnatal development, by repressing GRIN2B expression and thereby altering NMDA receptor properties from containing primarily GRIN2B to primarily GRIN2A subunits. Acts as a regulator of osteoblast differentiation. Key repressor of gene expression in hypoxia; represses genes in hypoxia by direct binding to an RE1/NRSE site on their promoter regions. May also function in stress resistance in the brain during aging; possibly by regulating expression of genes involved in cell death and in the stress response. Repressor of gene expression in the hippocampus after ischemia by directly binding to RE1/NRSE sites and recruiting SIN3A and RCOR1 to promoters of target genes, thereby promoting changes in chromatin modifications and ischemia-induced cell death. After ischemia, might play a role in repression of miR-132 expression in hippocampal neurons, thereby leading to neuronal cell death. Functionally, binds to the 3' region of the neuron-restrictive silencer element (NRSE), with lower affinity than full-length REST isoform 1. Exhibits weaker repressor activity compared to isoform 1. May negatively regulate the repressor activity of isoform 1 by binding to isoform 1, thereby preventing its binding to NRSE and leading to derepression of target genes. However, in another study, does not appear to be implicated in repressor activity of a NRSE motif-containing reporter construct nor in inhibitory activity on the isoform 1 transcriptional repressor activity. Post-transcriptional inactivation of REST by SRRM4-dependent alternative splicing into isoform 6 is required in mechanosensory hair cells in the inner ear for derepression of neuronal genes and hearing. The chain is RE1-silencing transcription factor (Rest) from Rattus norvegicus (Rat).